The sequence spans 368 residues: Nuclease EXOG, mitochondrial (368 aa).

Residues 1–41 (MAIKSIASRLRGSRRFLSGFVAGAVVGAAGAGLAALQFFRS) constitute a mitochondrion transit peptide. Histidine 140 (proton acceptor) is an active-site residue. An a divalent metal cation-binding site is contributed by asparagine 171.

It belongs to the DNA/RNA non-specific endonuclease family. Homodimer. The cofactor is a divalent metal cation. Ubiquitous.

It is found in the mitochondrion inner membrane. In terms of biological role, endo/exonuclease with nicking activity towards supercoiled DNA, a preference for single-stranded DNA and 5'-3' exonuclease activity. This Homo sapiens (Human) protein is Nuclease EXOG, mitochondrial (EXOG).